A 284-amino-acid polypeptide reads, in one-letter code: Bifunctional protein FolD (284 aa).

NADP(+)-binding positions include 166–168 (GAS), serine 191, and isoleucine 232.

The protein belongs to the tetrahydrofolate dehydrogenase/cyclohydrolase family. In terms of assembly, homodimer.

It carries out the reaction (6R)-5,10-methylene-5,6,7,8-tetrahydrofolate + NADP(+) = (6R)-5,10-methenyltetrahydrofolate + NADPH. It catalyses the reaction (6R)-5,10-methenyltetrahydrofolate + H2O = (6R)-10-formyltetrahydrofolate + H(+). It functions in the pathway one-carbon metabolism; tetrahydrofolate interconversion. In terms of biological role, catalyzes the oxidation of 5,10-methylenetetrahydrofolate to 5,10-methenyltetrahydrofolate and then the hydrolysis of 5,10-methenyltetrahydrofolate to 10-formyltetrahydrofolate. This chain is Bifunctional protein FolD, found in Thiobacillus denitrificans (strain ATCC 25259 / T1).